Here is a 137-residue protein sequence, read N- to C-terminus: Large ribosomal subunit protein uL16 (137 aa).

Belongs to the universal ribosomal protein uL16 family. As to quaternary structure, part of the 50S ribosomal subunit.

Binds 23S rRNA and is also seen to make contacts with the A and possibly P site tRNAs. The polypeptide is Large ribosomal subunit protein uL16 (Methylobacterium sp. (strain 4-46)).